Reading from the N-terminus, the 156-residue chain is MKIMGLDPGLNCTGWSILSVSKDIKLIDKGTVVTNSKEDTGQRLRKIHTDVLDILRLYQVDSASMEEIFINKNPKSSISLCYARGILLLTLSTKDIPVFEYSTNYVKKSITGNGHAKKEQVSFMIEKILNVKCSGTYDISDSIAVALCHAYSKKSF.

Catalysis depends on residues Asp-7, Glu-66, and Asp-138. Mg(2+)-binding residues include Asp-7, Glu-66, and Asp-138.

The protein belongs to the RuvC family. Homodimer which binds Holliday junction (HJ) DNA. The HJ becomes 2-fold symmetrical on binding to RuvC with unstacked arms; it has a different conformation from HJ DNA in complex with RuvA. In the full resolvosome a probable DNA-RuvA(4)-RuvB(12)-RuvC(2) complex forms which resolves the HJ. Mg(2+) serves as cofactor.

It localises to the cytoplasm. The catalysed reaction is Endonucleolytic cleavage at a junction such as a reciprocal single-stranded crossover between two homologous DNA duplexes (Holliday junction).. In terms of biological role, the RuvA-RuvB-RuvC complex processes Holliday junction (HJ) DNA during genetic recombination and DNA repair. Endonuclease that resolves HJ intermediates. Cleaves cruciform DNA by making single-stranded nicks across the HJ at symmetrical positions within the homologous arms, yielding a 5'-phosphate and a 3'-hydroxyl group; requires a central core of homology in the junction. The consensus cleavage sequence is 5'-(A/T)TT(C/G)-3'. Cleavage occurs on the 3'-side of the TT dinucleotide at the point of strand exchange. HJ branch migration catalyzed by RuvA-RuvB allows RuvC to scan DNA until it finds its consensus sequence, where it cleaves and resolves the cruciform DNA. This is Crossover junction endodeoxyribonuclease RuvC from Ehrlichia chaffeensis (strain ATCC CRL-10679 / Arkansas).